The sequence spans 273 residues: Dermonecrotic toxin LapSicTox-alphaII1 (273 aa).

Histidine 5 is a catalytic residue. The Mg(2+) site is built by glutamate 25 and aspartate 27. The active-site Nucleophile is histidine 41. Disulfide bonds link cysteine 45/cysteine 51 and cysteine 47/cysteine 191. Aspartate 85 lines the Mg(2+) pocket.

The protein belongs to the arthropod phospholipase D family. Class II subfamily. Mg(2+) serves as cofactor. In terms of tissue distribution, expressed by the venom gland.

It is found in the secreted. The catalysed reaction is an N-(acyl)-sphingosylphosphocholine = an N-(acyl)-sphingosyl-1,3-cyclic phosphate + choline. The enzyme catalyses an N-(acyl)-sphingosylphosphoethanolamine = an N-(acyl)-sphingosyl-1,3-cyclic phosphate + ethanolamine. It catalyses the reaction a 1-acyl-sn-glycero-3-phosphocholine = a 1-acyl-sn-glycero-2,3-cyclic phosphate + choline. It carries out the reaction a 1-acyl-sn-glycero-3-phosphoethanolamine = a 1-acyl-sn-glycero-2,3-cyclic phosphate + ethanolamine. Its function is as follows. Dermonecrotic toxins cleave the phosphodiester linkage between the phosphate and headgroup of certain phospholipids (sphingolipid and lysolipid substrates), forming an alcohol (often choline) and a cyclic phosphate. This toxin acts on sphingomyelin (SM). It may also act on ceramide phosphoethanolamine (CPE), lysophosphatidylcholine (LPC) and lysophosphatidylethanolamine (LPE), but not on lysophosphatidylserine (LPS), and lysophosphatidylglycerol (LPG). It acts by transphosphatidylation, releasing exclusively cyclic phosphate products as second products. Induces dermonecrosis, hemolysis, increased vascular permeability, edema, inflammatory response, and platelet aggregation. The protein is Dermonecrotic toxin LapSicTox-alphaII1 of Loxosceles apachea (Apache recluse spider).